Here is a 338-residue protein sequence, read N- to C-terminus: High mobility group B protein 9 (338 aa).

An ARID domain is found at 38 to 129; sequence VKDSSVFWDT…LLFHYEQVHL (92 aa). Residues 233-259 are disordered; sequence TGRRRRRLGKRRRSRRREDPNYPKPNR. Positions 235–247 are enriched in basic residues; that stretch reads RRRRRLGKRRRSR. Residues 255-322 constitute a DNA-binding region (HMG box); sequence PKPNRSGYNF…RYQRELNEYR (68 aa).

Predominantly expressed in leaves, flowers and seedlings.

It localises to the nucleus. Binds preferentially DNA with A/T-rich content. Required for karyogamy during female gametophyte development, when the two polar nuclei fuse to form the diploid central cell nucleus. The sequence is that of High mobility group B protein 9 (HMGB9) from Arabidopsis thaliana (Mouse-ear cress).